The chain runs to 286 residues: Alpha-ketoglutarate-dependent dioxygenase alkB homolog 3 (286 aa).

The tract at residues 1–46 (MEDKRQRARVQGGWATPTKSQSATQPASPARSRLSQTAGPAWRSKE) is disordered. Over residues 17-38 (PTKSQSATQPASPARSRLSQTA) the composition is skewed to polar residues. Residues tryptophan 115 and 141-143 (YTY) contribute to the substrate site. Residues 172–278 (TFNSLLCNFY…RVNLTFRTVY (107 aa)) form the Fe2OG dioxygenase domain. The residue at position 177 (leucine 177) is a (4R)-5-hydroxyleucine; alternate. Leucine 177 carries the post-translational modification (4R)-5-oxoleucine; alternate. Residue 179–181 (NFY) coordinates 2-oxoglutarate. Histidine 191 and aspartate 193 together coordinate Fe cation. A substrate-binding site is contributed by aspartate 194. Histidine 257 lines the Fe cation pocket. Residues 269–275 (RVNLTFR) and arginine 275 contribute to the 2-oxoglutarate site.

Belongs to the alkB family. As to quaternary structure, interacts with the ASCC complex composed of ASCC1, ASCC2 and ASCC3. Interacts directly with ASCC3, and is thereby recruited to the ASCC complex. Interacts with OTUD4; the interaction is direct. Interacts with USP7 and USP9X. Requires Fe(2+) as cofactor. Post-translationally, ubiquitinated; undergoes 'Lys-48'-linked polyubiquitination. OTUD4 promotes USP7 and USP9X-dependent deubiquitination of 'Lys-48'-polyubiquitinated ALKBH3 promoting the repair of alkylated DNA lesions. In terms of tissue distribution, detected in testis, kidney, liver and heart.

It is found in the nucleus. The protein localises to the cytoplasm. The catalysed reaction is an N(1)-methyladenosine in mRNA + 2-oxoglutarate + O2 = an adenosine in mRNA + formaldehyde + succinate + CO2. It carries out the reaction a methylated nucleobase within DNA + 2-oxoglutarate + O2 = a nucleobase within DNA + formaldehyde + succinate + CO2. The enzyme catalyses an N(1)-methyl-2'-deoxyadenosine in single-stranded DNA + 2-oxoglutarate + O2 = a 2'-deoxyadenosine in single-stranded DNA + formaldehyde + succinate + CO2 + H(+). It catalyses the reaction an N(3)-methyl-2'-deoxycytidine in single-stranded DNA + 2-oxoglutarate + O2 = a 2'-deoxycytidine in single-stranded DNA + formaldehyde + succinate + CO2 + H(+). The catalysed reaction is a 3,N(4)-etheno-2'-deoxycytidine in single-stranded DNA + 2-oxoglutarate + O2 + H2O = a 2'-deoxycytidine in single-stranded DNA + glyoxal + succinate + CO2. With respect to regulation, activated by ascorbate. Its function is as follows. Dioxygenase that mediates demethylation of DNA and RNA containing 1-methyladenosine (m1A). Repairs alkylated DNA containing 1-methyladenosine (m1A) and 3-methylcytosine (m3C) by oxidative demethylation. Has a strong preference for single-stranded DNA. Able to process alkylated m3C within double-stranded regions via its interaction with ASCC3, which promotes DNA unwinding to generate single-stranded substrate needed for ALKBH3. Can repair exocyclic 3,N4-ethenocytosine adducs in single-stranded DNA. Also acts on RNA. Demethylates N(1)-methyladenosine (m1A) RNA, an epigenetic internal modification of messenger RNAs (mRNAs) highly enriched within 5'-untranslated regions (UTRs) and in the vicinity of start codons. Requires molecular oxygen, alpha-ketoglutarate and iron. This Mus musculus (Mouse) protein is Alpha-ketoglutarate-dependent dioxygenase alkB homolog 3.